The primary structure comprises 144 residues: Large ribosomal subunit protein uL13 (144 aa).

The protein belongs to the universal ribosomal protein uL13 family. As to quaternary structure, part of the 50S ribosomal subunit.

Functionally, this protein is one of the early assembly proteins of the 50S ribosomal subunit, although it is not seen to bind rRNA by itself. It is important during the early stages of 50S assembly. This is Large ribosomal subunit protein uL13 from Clostridium kluyveri (strain NBRC 12016).